The chain runs to 687 residues: Protein white (687 aa).

Positions 1 to 30 are disordered; that stretch reads MGQEDQELLIRGGSKHPSAEHLNNGDSGAA. The Cytoplasmic portion of the chain corresponds to 1–419; that stretch reads MGQEDQELLI…FMQFRAVLWR (419 aa). An ABC transporter domain is found at 93–341; the sequence is NRTRGLFCNE…FSYVGAQCPT (249 aa). Residue 130–137 participates in ATP binding; the sequence is GSSGAGKT. Residues 420 to 440 traverse the membrane as a helical segment; that stretch reads SWLSVLKEPLLVKVRLIQTTM. Over 441–460 the chain is Extracellular; that stretch reads VAILIGLIFLGQQLTQVGVM. Residues 461–481 traverse the membrane as a helical segment; that stretch reads NINGAIFLFLTNMTFQNVFAT. At 482 to 497 the chain is on the cytoplasmic side; that stretch reads INVFTSELPVFMREAR. The chain crosses the membrane as a helical span at residues 498–518; sequence SRLYRCDTYFLGKTIAELPLF. The Extracellular portion of the chain corresponds to 519-531; sequence LTVPLVFTAIAYP. The helical transmembrane segment at 532-552 threads the bilayer; the sequence is MIGLRAGVLHFFNCLALVTLV. At 553–568 the chain is on the cytoplasmic side; it reads ANVSTSFGYLISCASS. Residues 569–589 form a helical membrane-spanning segment; the sequence is STSMALSVGPPVIIPFLLFGG. Topologically, residues 590–644 are extracellular; that stretch reads FFLNSGSVPVYLKWLSYLSWFRYANEGLLINQWADVEPGEISCTSSNTTCPSSGK. N636 carries N-linked (GlcNAc...) asparagine glycosylation. A helical membrane pass occupies residues 645-665; sequence VILETLNFSAADLPLDYVGLA. Over 666 to 675 the chain is Cytoplasmic; that stretch reads ILIVSFRVLA.

It belongs to the ABC transporter superfamily. ABCG family. Eye pigment precursor importer (TC 3.A.1.204) subfamily. May form a heterodimer with bw/brown. May form a heterodimer with st/scarlet. As to expression, expressed in the head (at protein level). Expressed in the eye, specifically in retina primary pigment cells, in the basement membrane of the base of secondary and tertiary pigment cells, and in retinula cells (at protein level). Expressed in the retina underlying lamina in the epithelial glia that surrounds the array of lamina cartridges (at protein level). Weakly expressed in photoreceptors, specifically in terminals of R1-R6, R7 and R8 (at protein level). Expressed at very low levels in medulla and central brain (at protein level). Expressed in principal cells of the Malpighian tubules.

Its subcellular location is the cytoplasmic vesicle membrane. It carries out the reaction 3',5'-cyclic GMP(in) + ATP + H2O = 3',5'-cyclic GMP(out) + ADP + phosphate + H(+). The catalysed reaction is guanine(out) + ATP + H2O = guanine(in) + ADP + phosphate + H(+). The enzyme catalyses riboflavin(in) + ATP + H2O = riboflavin(out) + ADP + phosphate + H(+). It catalyses the reaction (6S)-5,6,7,8-tetrahydrofolate(out) + ATP + H2O = (6S)-5,6,7,8-tetrahydrofolate(in) + ADP + phosphate + H(+). It carries out the reaction L-tryptophan(out) + ATP + H2O = L-tryptophan(in) + ADP + phosphate + H(+). The catalysed reaction is L-kynurenine(out) + ATP + H2O = L-kynurenine(in) + ADP + phosphate + H(+). The enzyme catalyses xanthine(out) + ATP + H2O = xanthine(in) + ADP + phosphate + H(+). Functionally, ATP-dependent transporter of the ATP-binding cassette (ABC) family which transports various molecules including bioamines, neurotransmitters, metabolic intermediates and second messengers. In the eye, required for the transport of the eye red and brown pigment precursors, guanine and tryptophan, into pigment cell granules. Probably in association with bw/brown, involved in the transport of guanine. Probably in association with st/scarlet involved in the transport of kynurenine and probably tryptophan. Involved in the transport of kynurenine in pupal eyes. May play a role in histamine uptake by the lamina epithelial glia which surrounds photoreceptors R1-R6. In Malpighian tubules, involved in the transport of cGMP, guanine, xanthine, riboflavin, kynurenine and tryptophan. Probably in association with br/brown, involved in aging-induced intestinal stem cell proliferation in the midgut by regulating tetrahydrofolate transport. Probably in association with st/scarlet, plays a role in zinc storage granule biogenesis in Malpighian tubule principal epithelial cells. This Drosophila melanogaster (Fruit fly) protein is Protein white.